Reading from the N-terminus, the 242-residue chain is Orotidine 5'-phosphate decarboxylase (242 aa).

Substrate contacts are provided by residues aspartate 16, lysine 37, 64–73 (DLKFHDIPNT), threonine 128, arginine 190, glutamine 199, glycine 219, and arginine 220. Lysine 66 serves as the catalytic Proton donor.

It belongs to the OMP decarboxylase family. Type 1 subfamily. As to quaternary structure, homodimer.

It catalyses the reaction orotidine 5'-phosphate + H(+) = UMP + CO2. It functions in the pathway pyrimidine metabolism; UMP biosynthesis via de novo pathway; UMP from orotate: step 2/2. Functionally, catalyzes the decarboxylation of orotidine 5'-monophosphate (OMP) to uridine 5'-monophosphate (UMP). This Prochlorococcus marinus (strain MIT 9312) protein is Orotidine 5'-phosphate decarboxylase.